Reading from the N-terminus, the 189-residue chain is Interferon alpha-D (189 aa).

The N-terminal stretch at Met1–Gly23 is a signal peptide. Disulfide bonds link Cys24–Cys122 and Cys52–Cys162.

It belongs to the alpha/beta interferon family.

It localises to the secreted. In terms of biological role, produced by macrophages, IFN-alpha have antiviral activities. Interferon stimulates the production of two enzymes: a protein kinase and an oligoadenylate synthetase. This chain is Interferon alpha-D (IFNAD), found in Bos taurus (Bovine).